Here is a 407-residue protein sequence, read N- to C-terminus: FMN-dependent alpha-hydroxy acid dehydrogenase PB1A11.03 (407 aa).

In terms of domain architecture, FMN hydroxy acid dehydrogenase spans Gln-28–Glu-406. Tyr-54 is an a 2-oxocarboxylate binding site. The FMN site is built by Ser-136 and Gln-158. Tyr-160 contributes to the a 2-oxocarboxylate binding site. An FMN-binding site is contributed by Thr-188. Arg-197 contacts a 2-oxocarboxylate. Lys-277 contacts FMN. Residue His-301 is the Proton acceptor of the active site. An a 2-oxocarboxylate-binding site is contributed by Arg-304. FMN-binding positions include Asp-332 to Arg-336 and Gly-355 to Arg-356.

This sequence belongs to the FMN-dependent alpha-hydroxy acid dehydrogenase family. FMN is required as a cofactor.

The protein localises to the cytoplasm. It localises to the nucleus. In Schizosaccharomyces pombe (strain 972 / ATCC 24843) (Fission yeast), this protein is FMN-dependent alpha-hydroxy acid dehydrogenase PB1A11.03.